We begin with the raw amino-acid sequence, 998 residues long: Ephrin type-B receptor 3 (998 aa).

The N-terminal stretch at Met-1 to Ala-33 is a signal peptide. Topologically, residues Gly-34–Leu-559 are extracellular. An Eph LBD domain is found at Glu-39 to Ala-217. The cysteines at positions 81 and 199 are disulfide-linked. 2 Fibronectin type-III domains span residues Val-339–Ala-451 and Ala-452–Glu-545. Asn-351 and Asn-445 each carry an N-linked (GlcNAc...) asparagine glycan. The helical transmembrane segment at Ile-560–Val-580 threads the bilayer. The Cytoplasmic portion of the chain corresponds to Cys-581–Val-998. A Phosphotyrosine; by autocatalysis modification is found at Tyr-614. The Protein kinase domain maps to Val-633–Ile-896. Residues Ile-639 to Val-647 and Lys-665 each bind ATP. The Proton acceptor role is filled by Asp-758. One can recognise an SAM domain in the interval Thr-925–Gln-989. A PDZ-binding motif is present at residues Val-996 to Val-998.

Belongs to the protein kinase superfamily. Tyr protein kinase family. Ephrin receptor subfamily. As to quaternary structure, heterotetramer upon binding of the ligand. The heterotetramer is composed of an ephrin dimer and a receptor dimer. Oligomerization is probably required to induce biological responses. In terms of processing, phosphorylated. Autophosphorylates upon ligand-binding. Autophosphorylation on Tyr-614 is required for interaction with SH2 domain-containing proteins. Ubiquitinated by RNF186, mainly through 'Lys-48' and 'Lys-63'-linked polyubiquitin chains. Ubiquitous.

The protein localises to the cell membrane. Its subcellular location is the cell projection. The protein resides in the dendrite. The enzyme catalyses L-tyrosyl-[protein] + ATP = O-phospho-L-tyrosyl-[protein] + ADP + H(+). Functionally, receptor tyrosine kinase which binds promiscuously transmembrane ephrin-B family ligands residing on adjacent cells, leading to contact-dependent bidirectional signaling into neighboring cells. The signaling pathway downstream of the receptor is referred to as forward signaling while the signaling pathway downstream of the ephrin ligand is referred to as reverse signaling. Generally has an overlapping and redundant function with EPHB2. Like EPHB2, functions in axon guidance during development regulating for instance the neurons forming the corpus callosum and the anterior commissure, 2 major interhemispheric connections between the temporal lobes of the cerebral cortex. In addition to its role in axon guidance also plays an important redundant role with other ephrin-B receptors in development and maturation of dendritic spines and the formation of excitatory synapses. Controls other aspects of development through regulation of cell migration and positioning. This includes angiogenesis, palate development and thymic epithelium development for instance. Forward and reverse signaling through the EFNB2/EPHB3 complex also regulate migration and adhesion of cells that tubularize the urethra and septate the cloaca. Finally, plays an important role in intestinal epithelium differentiation segregating progenitor from differentiated cells in the crypt. This chain is Ephrin type-B receptor 3 (EPHB3), found in Homo sapiens (Human).